The primary structure comprises 367 residues: Histidinol-phosphate aminotransferase 1 (367 aa).

K229 carries the N6-(pyridoxal phosphate)lysine modification.

This sequence belongs to the class-II pyridoxal-phosphate-dependent aminotransferase family. Histidinol-phosphate aminotransferase subfamily. Homodimer. It depends on pyridoxal 5'-phosphate as a cofactor.

The enzyme catalyses L-histidinol phosphate + 2-oxoglutarate = 3-(imidazol-4-yl)-2-oxopropyl phosphate + L-glutamate. It participates in amino-acid biosynthesis; L-histidine biosynthesis; L-histidine from 5-phospho-alpha-D-ribose 1-diphosphate: step 7/9. This Idiomarina loihiensis (strain ATCC BAA-735 / DSM 15497 / L2-TR) protein is Histidinol-phosphate aminotransferase 1.